The chain runs to 644 residues: Exoribonuclease 2 (644 aa).

An RNB domain is found at 189–516 (RQDLTALNFV…NHRLLKAVIK (328 aa)). Residues 561-643 (NTRFAAEIID…ETRSIIARPA (83 aa)) form the S1 motif domain.

This sequence belongs to the RNR ribonuclease family. RNase II subfamily.

Its subcellular location is the cytoplasm. It catalyses the reaction Exonucleolytic cleavage in the 3'- to 5'-direction to yield nucleoside 5'-phosphates.. Its function is as follows. Involved in mRNA degradation. Hydrolyzes single-stranded polyribonucleotides processively in the 3' to 5' direction. In Salmonella choleraesuis (strain SC-B67), this protein is Exoribonuclease 2.